We begin with the raw amino-acid sequence, 165 residues long: Large ribosomal subunit protein uL11A (165 aa).

At Arg67 the chain carries N5-methylarginine.

Belongs to the universal ribosomal protein uL11 family. In terms of assembly, component of the large ribosomal subunit (LSU). Mature yeast ribosomes consist of a small (40S) and a large (60S) subunit. The 40S small subunit contains 1 molecule of ribosomal RNA (18S rRNA) and at least 33 different proteins. The large 60S subunit contains 3 rRNA molecules (25S, 5.8S and 5S rRNA) and at least 46 different proteins.

It localises to the cytoplasm. The protein localises to the nucleus. It is found in the nucleolus. This protein binds directly to 26S ribosomal RNA. In terms of biological role, component of the ribosome, a large ribonucleoprotein complex responsible for the synthesis of proteins in the cell. The small ribosomal subunit (SSU) binds messenger RNAs (mRNAs) and translates the encoded message by selecting cognate aminoacyl-transfer RNA (tRNA) molecules. The large subunit (LSU) contains the ribosomal catalytic site termed the peptidyl transferase center (PTC), which catalyzes the formation of peptide bonds, thereby polymerizing the amino acids delivered by tRNAs into a polypeptide chain. The nascent polypeptides leave the ribosome through a tunnel in the LSU and interact with protein factors that function in enzymatic processing, targeting, and the membrane insertion of nascent chains at the exit of the ribosomal tunnel. In Schizosaccharomyces pombe (strain 972 / ATCC 24843) (Fission yeast), this protein is Large ribosomal subunit protein uL11A (rpl1201).